Here is a 198-residue protein sequence, read N- to C-terminus: FMN-dependent NADH:quinone oxidoreductase (198 aa).

An FMN-binding site is contributed by 96–99; that stretch reads MYNF.

The protein belongs to the azoreductase type 1 family. Homodimer. FMN is required as a cofactor.

The enzyme catalyses 2 a quinone + NADH + H(+) = 2 a 1,4-benzosemiquinone + NAD(+). It carries out the reaction N,N-dimethyl-1,4-phenylenediamine + anthranilate + 2 NAD(+) = 2-(4-dimethylaminophenyl)diazenylbenzoate + 2 NADH + 2 H(+). Its function is as follows. Quinone reductase that provides resistance to thiol-specific stress caused by electrophilic quinones. In terms of biological role, also exhibits azoreductase activity. Catalyzes the reductive cleavage of the azo bond in aromatic azo compounds to the corresponding amines. This chain is FMN-dependent NADH:quinone oxidoreductase, found in Burkholderia thailandensis (strain ATCC 700388 / DSM 13276 / CCUG 48851 / CIP 106301 / E264).